We begin with the raw amino-acid sequence, 517 residues long: Cytochrome P450 monooxygenase cdmJ (517 aa).

Residues 15 to 35 form a helical membrane-spanning segment; sequence YMWSLTLFALCLSAILMFPFL. N404 carries an N-linked (GlcNAc...) asparagine glycan. Residue C451 coordinates heme.

This sequence belongs to the cytochrome P450 family. Requires heme as cofactor.

The protein resides in the membrane. It catalyses the reaction 3-hydroxypentacecilide A + NADPH + O2 + H(+) = chrodrimanin F + NADP(+) + H2O. The enzyme catalyses chrodrimanin C + NADPH + O2 + H(+) = chrodrimanin H + NADP(+) + H2O. The catalysed reaction is verruculide A + NADPH + O2 + H(+) = chrodrimanin E + NADP(+) + H2O. It carries out the reaction chrodrimanin T + NADPH + O2 + H(+) = chrodrimanin A + NADP(+) + H2O. Its pathway is secondary metabolite biosynthesis; terpenoid biosynthesis. In terms of biological role, cytochrome P450 monooxygenase; part of the gene cluster that mediates the biosynthesis of chrodrimanin B, a meroterpenoid that acts as a potent blocker of insect GABA-gated chloride channels. The first step of the pathway is the biosynthesis of 6-hydroxymellein by the polyketide synthase cdmE. The prenyltransferase cdmH acts as a 6-hydroxymellein 5-farnesyltransferase and produces the hydrophobic metabolite verruculide C. The FAD-dependent monooxygenase cdmI further converts verruculide C into verruculide B. The terpene cyclase cdmG then produced the pentacyclic molecule 3-hydroxypentacecilide A, the backbone structure of chrodrimanin B, via folding the farnesyl moiety of the substrate into the chair-boat conformation. The short-chain dehydrogenase/reductase cdmF functions as the 3-OH dehydrogenase that oxidizes the C-3 hydroxyl group of 3-hydroxypentacecilide A and produces chrodrimanin C, the dehydrogenated product of 3-hydroxypentacecilide A. The cytochrome P450 monooxygenase cdmJ then accepts both 3-hydroxypentacecilide A and chrodrimanin C and functions as a C-7-beta-hydroxylase to produce respectively chrodrimanin H and chrodrimanin F. The dioxygenase cdmA accepts chrodrimanin H to afford chrodrimanin E, which is further transformed to chrodrimanin A by the dioxygenase cdmD. CdmA can also accept chrodrimanin C as substrate to convert it into verruculide A, which is further converted into chrodrimanin T by cdmD. The last step of the biosynthesis is proposed to be performed by the acetyltransferase cdmC which acetylates chrodrimanin A to yield chrodrimanin B. The pathway may also lead to the production of additional shunt products, including chrodrimanins T and U. The protein is Cytochrome P450 monooxygenase cdmJ of Talaromyces verruculosus (Penicillium verruculosum).